Reading from the N-terminus, the 445-residue chain is Glycine betaine monooxygenase oxygenase subunit (445 aa).

Residues 73-180 (WLFVGMTCEI…VTHAGGFLFV (108 aa)) enclose the Rieske domain. [2Fe-2S] cluster-binding residues include cysteine 115, histidine 117, cysteine 135, and histidine 138. Residues histidine 234 and histidine 239 each coordinate Fe cation.

It belongs to the bacterial ring-hydroxylating dioxygenase alpha subunit family. In terms of assembly, homotrimer. The system is composed of an oxygenase subunit (BmoA) and a reductase subunit (BmoB). Maximal specific activity is obtained when the ratio of BmoA to BmoB is 5:1. [2Fe-2S] cluster serves as cofactor. It depends on Fe cation as a cofactor.

It carries out the reaction glycine betaine + NADH + O2 + H(+) = N,N-dimethylglycine + formaldehyde + NAD(+) + H2O. Its activity is regulated as follows. Activity is absolutely dependent on the presence of BmoB. Glycine betaine monooxygenase activity is significantly enhanced by Fe(2+) and severely inhibited by heavy-metal ions, including Co(2+), Mn(2+), Zn(2+), Cu(2+) and Ag(+). Severely inhibited by EDTA. In terms of biological role, involved in degradation of glycine betaine. Part of a Rieske-type oxygenase system that catalyzes the conversion of glycine betaine (GB) to dimethylglycine (DMG). This subunit is the terminal oxygenase component of the system. Is specific for GB, and does not show any activity on choline, L-carnitine, stachydrine, dimethylglycine or sarcosine. Activity is strictly dependent on NADH. This Chromohalobacter salexigens (strain ATCC BAA-138 / DSM 3043 / CIP 106854 / NCIMB 13768 / 1H11) protein is Glycine betaine monooxygenase oxygenase subunit.